A 31-amino-acid polypeptide reads, in one-letter code: Photosystem II reaction center protein T (31 aa).

A helical transmembrane segment spans residues 3-23 (AFSYVLILTLALVTLFFAVAF).

It belongs to the PsbT family. PSII is composed of 1 copy each of membrane proteins PsbA, PsbB, PsbC, PsbD, PsbE, PsbF, PsbH, PsbI, PsbJ, PsbK, PsbL, PsbM, PsbT, PsbX, PsbY, Psb30/Ycf12, peripheral proteins PsbO, CyanoQ (PsbQ), PsbU, PsbV and a large number of cofactors. It forms dimeric complexes.

The protein resides in the cellular thylakoid membrane. Its function is as follows. Found at the monomer-monomer interface of the photosystem II (PS II) dimer, plays a role in assembly and dimerization of PSII. PSII is a light-driven water plastoquinone oxidoreductase, using light energy to abstract electrons from H(2)O, generating a proton gradient subsequently used for ATP formation. This Prochlorococcus marinus (strain NATL2A) protein is Photosystem II reaction center protein T.